The chain runs to 200 residues: AP-5 complex subunit sigma-1 (200 aa).

As to quaternary structure, probably part of the adaptor protein complex 5 (AP-5) a tetramer composed of AP5B1, AP5M1, AP5S1 and AP5Z1. Interacts with ZFYVE26 and SPG11.

It localises to the cytoplasm. The protein localises to the cytosol. Its subcellular location is the late endosome membrane. It is found in the lysosome membrane. In terms of biological role, as part of AP-5, a probable fifth adaptor protein complex it may be involved in endosomal transport. According to PubMed:20613862, it is required for efficient homologous recombination DNA double-strand break repair. In Homo sapiens (Human), this protein is AP-5 complex subunit sigma-1 (AP5S1).